A 248-amino-acid polypeptide reads, in one-letter code: Adenosylcobinamide-GDP ribazoletransferase (248 aa).

Helical transmembrane passes span 34–54 (LVFA…LFYI), 58–78 (FFPP…LTGG), 113–133 (AVLA…SIPL), 139–159 (ALLL…GSTV), 185–205 (IIYF…LAAA), and 227–247 (DILG…FYLF).

The protein belongs to the CobS family. The cofactor is Mg(2+).

It is found in the cell membrane. The enzyme catalyses alpha-ribazole + adenosylcob(III)inamide-GDP = adenosylcob(III)alamin + GMP + H(+). It catalyses the reaction alpha-ribazole 5'-phosphate + adenosylcob(III)inamide-GDP = adenosylcob(III)alamin 5'-phosphate + GMP + H(+). It participates in cofactor biosynthesis; adenosylcobalamin biosynthesis; adenosylcobalamin from cob(II)yrinate a,c-diamide: step 7/7. In terms of biological role, joins adenosylcobinamide-GDP and alpha-ribazole to generate adenosylcobalamin (Ado-cobalamin). Also synthesizes adenosylcobalamin 5'-phosphate from adenosylcobinamide-GDP and alpha-ribazole 5'-phosphate. This is Adenosylcobinamide-GDP ribazoletransferase from Acetivibrio thermocellus (strain ATCC 27405 / DSM 1237 / JCM 9322 / NBRC 103400 / NCIMB 10682 / NRRL B-4536 / VPI 7372) (Clostridium thermocellum).